A 464-amino-acid polypeptide reads, in one-letter code: Glutamate--tRNA ligase 2 (464 aa).

The 'HIGH' region signature appears at 11–21; sequence PSPTGFLHIGS. Residues 240–244 carry the 'KMSKS' region motif; sequence KLSKR. K243 provides a ligand contact to ATP.

It belongs to the class-I aminoacyl-tRNA synthetase family. Glutamate--tRNA ligase type 1 subfamily. Monomer.

The protein resides in the cytoplasm. It carries out the reaction tRNA(Glu) + L-glutamate + ATP = L-glutamyl-tRNA(Glu) + AMP + diphosphate. In terms of biological role, catalyzes the attachment of glutamate to tRNA(Glu) in a two-step reaction: glutamate is first activated by ATP to form Glu-AMP and then transferred to the acceptor end of tRNA(Glu). The protein is Glutamate--tRNA ligase 2 of Rickettsia bellii (strain OSU 85-389).